The following is a 300-amino-acid chain: MNQSYGRLVSRAAIAATAMASLLLLIKIFAWWYTGSVSILAALVDSLVDIGASLTNLLVVRYSLQPADDNHSFGHGKAESLAALAQSMFISGSALFLFLTGIQHLISPTPMTDPGVGVIVTIVALICTIILVSFQRWVVRRTQSQAVRADMLHYQSDVMMNGAILLALGLSWYGWHRADALFALGIGIYILYSALRMGYEAVQSLLDRALPDEERQEIIDIVTSWPGVSGAHDLRTRQSGPTRFIQIHLEMEDSLPLVQAHMVADQVEQAILRRFPGSDVIIHQDPCSVVPREGKRSMLS.

The next 4 membrane-spanning stretches (helical) occupy residues 12–32 (AAIAATAMASLLLLIKIFAWW), 39–59 (ILAALVDSLVDIGASLTNLLV), 82–102 (AALAQSMFISGSALFLFLTGI), and 114–134 (PGVGVIVTIVALICTIILVSF). The Zn(2+) site is built by Asp-45 and Asp-49. Residues His-153 and Asp-157 each coordinate Zn(2+). A run of 2 helical transmembrane segments spans residues 156 to 176 (SDVMMNGAILLALGLSWYGWH) and 178 to 198 (ADALFALGIGIYILYSALRMG).

The protein belongs to the cation diffusion facilitator (CDF) transporter (TC 2.A.4) family. FieF subfamily. In terms of assembly, homodimer.

The protein resides in the cell inner membrane. It carries out the reaction Zn(2+)(in) + H(+)(out) = Zn(2+)(out) + H(+)(in). The catalysed reaction is Cd(2+)(in) + H(+)(out) = Cd(2+)(out) + H(+)(in). The enzyme catalyses Fe(2+)(in) + H(+)(out) = Fe(2+)(out) + H(+)(in). Its function is as follows. Divalent metal cation transporter which exports Zn(2+), Cd(2+) and possibly Fe(2+). May be involved in zinc and iron detoxification by efflux. This Escherichia coli O157:H7 (strain EC4115 / EHEC) protein is Cation-efflux pump FieF.